We begin with the raw amino-acid sequence, 675 residues long: DNA ligase (675 aa).

Residues 32–36 (DAEYD), 81–82 (SL), and Glu113 each bind NAD(+). Lys115 functions as the N6-AMP-lysine intermediate in the catalytic mechanism. NAD(+) is bound by residues Arg136, Glu173, Lys291, and Lys315. The Zn(2+) site is built by Cys409, Cys412, Cys427, and Cys433. A BRCT domain is found at 595 to 675 (SEKTYFFNKK…ELNSLIRIKE (81 aa)).

This sequence belongs to the NAD-dependent DNA ligase family. LigA subfamily. Mg(2+) is required as a cofactor. Mn(2+) serves as cofactor.

The enzyme catalyses NAD(+) + (deoxyribonucleotide)n-3'-hydroxyl + 5'-phospho-(deoxyribonucleotide)m = (deoxyribonucleotide)n+m + AMP + beta-nicotinamide D-nucleotide.. In terms of biological role, DNA ligase that catalyzes the formation of phosphodiester linkages between 5'-phosphoryl and 3'-hydroxyl groups in double-stranded DNA using NAD as a coenzyme and as the energy source for the reaction. It is essential for DNA replication and repair of damaged DNA. The sequence is that of DNA ligase from Buchnera aphidicola subsp. Acyrthosiphon pisum (strain APS) (Acyrthosiphon pisum symbiotic bacterium).